We begin with the raw amino-acid sequence, 146 residues long: uncharacterized protein (146 aa).

The 140-residue stretch at 7-146 folds into the N-acetyltransferase domain; that stretch reads LQINYKTDEL…EGHDILIWNP (140 aa).

This is an uncharacterized protein from Staphylococcus epidermidis (strain ATCC 35984 / DSM 28319 / BCRC 17069 / CCUG 31568 / BM 3577 / RP62A).